Here is a 559-residue protein sequence, read N- to C-terminus: Coiled-coil domain-containing protein 63 (559 aa).

Coiled-coil stretches lie at residues 14 to 70 (ELSE…QAET), 185 to 261 (EKAA…KLKS), and 364 to 414 (QQQS…VEKL).

In terms of biological role, plays a role in spermiogenesis. Involved in the elongation of flagella and the formation of sperm heads. This Rattus norvegicus (Rat) protein is Coiled-coil domain-containing protein 63.